A 356-amino-acid chain; its full sequence is Sensor protein BasS (356 aa).

Topologically, residues 1–13 (MRFQRRAMTLRQR) are cytoplasmic. Residues 14–34 (LMLTIGLILLVFQLISTFWLW) form a helical membrane-spanning segment. The Periplasmic portion of the chain corresponds to 35–64 (HESTEQIQLFEQALRDNRNNDRHIMHEIRE). Residues 65-88 (AVASLIVPGVFMVSLTLLICYQAV) traverse the membrane as a helical segment. The 53-residue stretch at 89–141 (RRITRPLAELQKELEARTADNLAPIAIHSSTLEIESVVSAINQLVTRLTTTLD) folds into the HAMP domain. The Cytoplasmic portion of the chain corresponds to 89–356 (RRITRPLAEL…TRAWVLLKKA (268 aa)). In terms of domain architecture, Histidine kinase spans 149 to 356 (DVAHELRTPL…TRAWVLLKKA (208 aa)). At histidine 152 the chain carries Phosphohistidine; by autocatalysis.

Post-translationally, autophosphorylated.

Its subcellular location is the cell inner membrane. It catalyses the reaction ATP + protein L-histidine = ADP + protein N-phospho-L-histidine.. In terms of biological role, member of the two-component regulatory system BasS/BasR. Autophosphorylates and activates BasR by phosphorylation. Plays a role in the adaptation of the organism to the host environment, in particular to neutrophils, and therefore it plays a role in virulence as well. The chain is Sensor protein BasS (basS) from Salmonella typhimurium (strain LT2 / SGSC1412 / ATCC 700720).